The sequence spans 202 residues: N-(5'-phosphoribosyl)anthranilate isomerase (202 aa).

This sequence belongs to the TrpF family.

It carries out the reaction N-(5-phospho-beta-D-ribosyl)anthranilate = 1-(2-carboxyphenylamino)-1-deoxy-D-ribulose 5-phosphate. Its pathway is amino-acid biosynthesis; L-tryptophan biosynthesis; L-tryptophan from chorismate: step 3/5. The sequence is that of N-(5'-phosphoribosyl)anthranilate isomerase from Bacillus cereus (strain ATCC 14579 / DSM 31 / CCUG 7414 / JCM 2152 / NBRC 15305 / NCIMB 9373 / NCTC 2599 / NRRL B-3711).